A 215-amino-acid chain; its full sequence is Large ribosomal subunit protein mL43 (215 aa).

The protein belongs to the mitochondrion-specific ribosomal protein mL43 family. As to quaternary structure, component of the mitochondrial large ribosomal subunit (mt-LSU). Mature mammalian 55S mitochondrial ribosomes consist of a small (28S) and a large (39S) subunit. The 28S small subunit contains a 12S ribosomal RNA (12S mt-rRNA) and 30 different proteins. The 39S large subunit contains a 16S rRNA (16S mt-rRNA), a copy of mitochondrial valine transfer RNA (mt-tRNA(Val)), which plays an integral structural role, and 52 different proteins. High relative levels in skeletal muscle and testis. Lower levels of expression in the heart, brain, placenta, lung, liver, kidney, pancreas, spleen, thymus, prostate, ovary, small intestine, colon and leukocytes. Expression is coregulated with TWNK.

The protein resides in the mitochondrion. This Homo sapiens (Human) protein is Large ribosomal subunit protein mL43 (MRPL43).